Here is a 220-residue protein sequence, read N- to C-terminus: ATP-dependent dethiobiotin synthetase BioD (220 aa).

12–17 (DVGKTI) provides a ligand contact to ATP. T16 contributes to the Mg(2+) binding site. K37 is a catalytic residue. A substrate-binding site is contributed by T41. ATP contacts are provided by residues D49, 107-110 (EGAG), 167-168 (GS), and 197-199 (PAG). Mg(2+)-binding residues include D49 and E107.

The protein belongs to the dethiobiotin synthetase family. Homodimer. The cofactor is Mg(2+).

It localises to the cytoplasm. The catalysed reaction is (7R,8S)-7,8-diammoniononanoate + CO2 + ATP = (4R,5S)-dethiobiotin + ADP + phosphate + 3 H(+). The protein operates within cofactor biosynthesis; biotin biosynthesis; biotin from 7,8-diaminononanoate: step 1/2. Its function is as follows. Catalyzes a mechanistically unusual reaction, the ATP-dependent insertion of CO2 between the N7 and N8 nitrogen atoms of 7,8-diaminopelargonic acid (DAPA, also called 7,8-diammoniononanoate) to form a ureido ring. The sequence is that of ATP-dependent dethiobiotin synthetase BioD from Corynebacterium efficiens (strain DSM 44549 / YS-314 / AJ 12310 / JCM 11189 / NBRC 100395).